The following is a 552-amino-acid chain: Putative transport protein HS_1470 (552 aa).

Transmembrane regions (helical) follow at residues 4-24, 28-48, 67-87, 95-115, and 157-177; these read IAIT…IGHW, GVGL…HFMN, LILF…ASLL, GLAT…YKVV, and MAYA…MWLI. 2 consecutive RCK C-terminal domains span residues 190 to 275 and 277 to 360; these read KQFQ…VIGE and IDMP…IIGN. 6 helical membrane passes run 370–390, 402–424, 438–458, 463–483, 495–515, and 529–549; these read MLPV…PFYI, AGGP…LYWF, IVLF…DTLV, LEWM…TGII, LCGL…ANAI, and VYPL…ILLW.

It belongs to the AAE transporter (TC 2.A.81) family. YidE subfamily.

The protein resides in the cell membrane. This chain is Putative transport protein HS_1470, found in Histophilus somni (strain 129Pt) (Haemophilus somnus).